A 326-amino-acid polypeptide reads, in one-letter code: Gamma-resorcylate decarboxylase (326 aa).

Mn(2+) is bound by residues glutamate 8, histidine 10, histidine 164, and aspartate 287. The active site involves aspartate 287.

This sequence belongs to the metallo-dependent hydrolases superfamily. ACMSD family. In terms of assembly, homotetramer. Mn(2+) serves as cofactor.

It catalyses the reaction 2,6-dihydroxybenzoate + H(+) = resorcinol + CO2. The enzyme catalyses 2,3-dihydroxybenzoate + H(+) = catechol + CO2. Its pathway is aromatic compound metabolism. Activity is inhibited by 2-nitroresorcinol (2-NR). Functionally, involved in the gamma-resorcylate (2,6-dihydroxybenzoate) catabolism. Catalyzes the reversible decarboxylation of gamma-resorcylate to resorcinol. Also catalyzes the decarboxylation of 2,3-dihydroxybenzoate to catechol, 2,4,6-trihydroxybenzoate to benzene-1,3,5-triol, and 2,6-dihydroxy-4-methylbenzoate to 5-methylbenzene-1,3-diol. This chain is Gamma-resorcylate decarboxylase, found in Polaromonas sp. (strain JS666 / ATCC BAA-500).